We begin with the raw amino-acid sequence, 193 residues long: Ion-translocating oxidoreductase complex subunit A (193 aa).

A run of 6 helical transmembrane segments spans residues 5–25 (LLLF…FLGL), 39–59 (IGMG…AWMV), 62–82 (FILL…LVIA), 102–122 (LLGI…VALL), 134–154 (AVYG…FAAI), and 171–191 (SIAL…TGLV).

Belongs to the NqrDE/RnfAE family. The complex is composed of six subunits: RnfA, RnfB, RnfC, RnfD, RnfE and RnfG.

Its subcellular location is the cell inner membrane. In terms of biological role, part of a membrane-bound complex that couples electron transfer with translocation of ions across the membrane. The chain is Ion-translocating oxidoreductase complex subunit A from Yersinia pestis (strain Pestoides F).